The chain runs to 172 residues: Galectin-related protein (172 aa).

A2 is modified (N-acetylalanine). Phosphoserine is present on residues S22 and S25. A Galectin domain is found at 39–168 (PFCGHIKGGM…TIKINGDLQI (130 aa)).

Monomer.

Its function is as follows. Does not bind lactose, and may not bind carbohydrates. This chain is Galectin-related protein (LGALSL), found in Homo sapiens (Human).